The sequence spans 189 residues: Ribosome maturation factor RimP (189 aa).

The protein belongs to the RimP family.

Its subcellular location is the cytoplasm. In terms of biological role, required for maturation of 30S ribosomal subunits. This is Ribosome maturation factor RimP from Corynebacterium kroppenstedtii (strain DSM 44385 / JCM 11950 / CIP 105744 / CCUG 35717).